A 923-amino-acid chain; its full sequence is Alanine--tRNA ligase (923 aa).

Zn(2+) contacts are provided by His611, His615, Cys714, and His718.

This sequence belongs to the class-II aminoacyl-tRNA synthetase family. Zn(2+) serves as cofactor.

The protein localises to the cytoplasm. It catalyses the reaction tRNA(Ala) + L-alanine + ATP = L-alanyl-tRNA(Ala) + AMP + diphosphate. In terms of biological role, catalyzes the attachment of alanine to tRNA(Ala) in a two-step reaction: alanine is first activated by ATP to form Ala-AMP and then transferred to the acceptor end of tRNA(Ala). Also edits incorrectly charged Ser-tRNA(Ala) and Gly-tRNA(Ala) via its editing domain. This chain is Alanine--tRNA ligase, found in Methanosarcina barkeri (strain Fusaro / DSM 804).